The sequence spans 193 residues: Adenine phosphoribosyltransferase (193 aa).

It belongs to the purine/pyrimidine phosphoribosyltransferase family. In terms of assembly, homodimer.

Its subcellular location is the cytoplasm. It carries out the reaction AMP + diphosphate = 5-phospho-alpha-D-ribose 1-diphosphate + adenine. The protein operates within purine metabolism; AMP biosynthesis via salvage pathway; AMP from adenine: step 1/1. In terms of biological role, catalyzes a salvage reaction resulting in the formation of AMP, that is energically less costly than de novo synthesis. The chain is Adenine phosphoribosyltransferase from Bifidobacterium longum subsp. infantis (strain ATCC 15697 / DSM 20088 / JCM 1222 / NCTC 11817 / S12).